The chain runs to 341 residues: L-threonine 3-dehydrogenase (341 aa).

Cys38 provides a ligand contact to Zn(2+). Active-site charge relay system residues include Thr40 and His43. The Zn(2+) site is built by His63, Glu64, Cys93, Cys96, Cys99, and Cys107. NAD(+)-binding positions include Ile175, Asp195, Arg200, Leu262–Ile264, and Ile286–Tyr287.

Belongs to the zinc-containing alcohol dehydrogenase family. Homotetramer. The cofactor is Zn(2+).

The protein localises to the cytoplasm. The enzyme catalyses L-threonine + NAD(+) = (2S)-2-amino-3-oxobutanoate + NADH + H(+). It functions in the pathway amino-acid degradation; L-threonine degradation via oxydo-reductase pathway; glycine from L-threonine: step 1/2. Functionally, catalyzes the NAD(+)-dependent oxidation of L-threonine to 2-amino-3-ketobutyrate. The protein is L-threonine 3-dehydrogenase of Shewanella woodyi (strain ATCC 51908 / MS32).